A 36-amino-acid polypeptide reads, in one-letter code: Fructose-1,6-/sedoheptulose-1,7-bisphosphate aldolase (36 aa).

This Nitrobacter vulgaris protein is Fructose-1,6-/sedoheptulose-1,7-bisphosphate aldolase (cbbA).